The following is a 49-amino-acid chain: Agglutinin-1 (49 aa).

As to quaternary structure, homooligomer. Post-translationally, glycosylated.

Beta-galactoside specific lectin. Has a hemagglutinating activity on erythrocytes. This chain is Agglutinin-1, found in Pomacea flagellata (Apple snail).